Here is a 500-residue protein sequence, read N- to C-terminus: UDP-N-acetylmuramoyl-L-alanyl-D-glutamate--2,6-diaminopimelate ligase (500 aa).

S32 serves as a coordination point for UDP-N-acetyl-alpha-D-muramoyl-L-alanyl-D-glutamate. Residue 117–123 (GTNGKTT) coordinates ATP. UDP-N-acetyl-alpha-D-muramoyl-L-alanyl-D-glutamate is bound by residues 159–160 (TT), S186, Q192, and R194. K226 is modified (N6-carboxylysine). Meso-2,6-diaminopimelate is bound by residues R395, 419–422 (DNPR), G470, and E474. Residues 419–422 (DNPR) carry the Meso-diaminopimelate recognition motif motif.

This sequence belongs to the MurCDEF family. MurE subfamily. Requires Mg(2+) as cofactor. Post-translationally, carboxylation is probably crucial for Mg(2+) binding and, consequently, for the gamma-phosphate positioning of ATP.

It localises to the cytoplasm. The enzyme catalyses UDP-N-acetyl-alpha-D-muramoyl-L-alanyl-D-glutamate + meso-2,6-diaminopimelate + ATP = UDP-N-acetyl-alpha-D-muramoyl-L-alanyl-gamma-D-glutamyl-meso-2,6-diaminopimelate + ADP + phosphate + H(+). The protein operates within cell wall biogenesis; peptidoglycan biosynthesis. In terms of biological role, catalyzes the addition of meso-diaminopimelic acid to the nucleotide precursor UDP-N-acetylmuramoyl-L-alanyl-D-glutamate (UMAG) in the biosynthesis of bacterial cell-wall peptidoglycan. The polypeptide is UDP-N-acetylmuramoyl-L-alanyl-D-glutamate--2,6-diaminopimelate ligase (Parasynechococcus marenigrum (strain WH8102)).